Consider the following 324-residue polypeptide: Gamma-soluble NSF attachment protein (324 aa).

The span at 285-298 shows a compositional bias: polar residues; that stretch reads NPTINSTAPQQQYS. The disordered stretch occupies residues 285 to 324; the sequence is NPTINSTAPQQQYSNTTTTTTNNTNNNNPTSQQDDDEDVL. Over residues 299 to 312 the composition is skewed to low complexity; that stretch reads NTTTTTTNNTNNNN.

It belongs to the SNAP family. Interacts with nsfA and probably SNARE proteins.

The protein localises to the cytoplasmic vesicle membrane. Its function is as follows. May be required for vesicular transport between the endoplasmic reticulum and the Golgi apparatus. Involved in vesicle fusion with nsfA and probably SNARE proteins. This chain is Gamma-soluble NSF attachment protein (snpC), found in Dictyostelium discoideum (Social amoeba).